The chain runs to 364 residues: PDZ and LIM domain protein 3 (364 aa).

Residues 1–84 (MPQTVILPGP…QLCLKIDRGE (84 aa)) enclose the PDZ domain. Residues Ser18, Ser93, and Ser264 each carry the phosphoserine modification. One can recognise an LIM zinc-binding domain in the interval 292–351 (PLCDKCGSGIVGAVVKARDKYRHPECFVCADCNLNLKQKGYFFIEGELYCETHARARTKP).

In terms of assembly, interacts with ACTN2. Forms a heterodimer with PDLIM4 (via LIM domain). Isoform 1 is highly expressed in differentiated skeletal muscle. Isoform 2 is heart-specific.

Its subcellular location is the cytoplasm. The protein resides in the myofibril. It is found in the sarcomere. The protein localises to the z line. Functionally, may play a role in the organization of actin filament arrays within muscle cells. The chain is PDZ and LIM domain protein 3 (PDLIM3) from Homo sapiens (Human).